A 240-amino-acid chain; its full sequence is Arginine transport ATP-binding protein ArtM (240 aa).

Residues 2-236 form the ABC transporter domain; sequence IKVEKLSKSF…PKSKRAQDFL (235 aa). Residue 34-41 coordinates ATP; sequence GPSGSGKS.

It belongs to the ABC transporter superfamily.

Its subcellular location is the cell membrane. Its function is as follows. Part of a binding-protein-dependent transport system for arginine. Probably responsible for energy coupling to the transport system. This Bacillus subtilis (strain 168) protein is Arginine transport ATP-binding protein ArtM (artM).